Here is a 240-residue protein sequence, read N- to C-terminus: tRNA pseudouridine synthase A (240 aa).

Asp50 (nucleophile) is an active-site residue. Residue Tyr109 coordinates substrate.

This sequence belongs to the tRNA pseudouridine synthase TruA family. As to quaternary structure, homodimer.

It catalyses the reaction uridine(38/39/40) in tRNA = pseudouridine(38/39/40) in tRNA. In terms of biological role, formation of pseudouridine at positions 38, 39 and 40 in the anticodon stem and loop of transfer RNAs. The protein is tRNA pseudouridine synthase A of Campylobacter jejuni (strain RM1221).